The primary structure comprises 959 residues: Probable serine/threonine-protein kinase DDB_G0291664 (959 aa).

The interval 154 to 213 (QQQQQQQLTPPPSPPLLPIPQPPAQNEEQQLTQPPSIPPPQQKQIKIQKSDRGTQVKSIT) is disordered. A compositionally biased stretch (pro residues) spans 162–176 (TPPPSPPLLPIPQPP). ANK repeat units follow at residues 294–324 (KGET…CMGI) and 333–362 (LNKN…PLKM). Residues 482-762 (IDFHTQIGSA…EVGIIETEFL (281 aa)) enclose the Protein kinase domain. ATP contacts are provided by residues 488-496 (IGSAGNASV) and lysine 509. The Proton acceptor role is filled by aspartate 610. The interval 904-959 (NNINNNNNNNNNCNNSKKFKTTSESTSALGSDASSSSSPSSSSPSPKYSASIYHHQ) is disordered.

The protein belongs to the protein kinase superfamily. Ser/Thr protein kinase family.

It catalyses the reaction L-seryl-[protein] + ATP = O-phospho-L-seryl-[protein] + ADP + H(+). The enzyme catalyses L-threonyl-[protein] + ATP = O-phospho-L-threonyl-[protein] + ADP + H(+). In Dictyostelium discoideum (Social amoeba), this protein is Probable serine/threonine-protein kinase DDB_G0291664.